We begin with the raw amino-acid sequence, 500 residues long: Protein gar2 (500 aa).

Basic and acidic residues-rich tracts occupy residues 1–41 and 59–68; these read MAKK…KEIA and KRASSPEPSK. The segment at 1-262 is disordered; sequence MAKKDKTSVK…TKPSQDSNET (262 aa). A compositionally biased stretch (basic residues) spans 69–78; that stretch reads KSVKKQKKSK. The span at 90 to 120 shows a compositional bias: low complexity; it reads ESSSSESESSSSESESSSSESESSSSESSSS. The segment covering 126–137 has biased composition (basic and acidic residues); the sequence is VIVKTEEKKESS. Residues serine 143, serine 144, and serine 146 each carry the phosphoserine modification. The segment covering 152–163 has biased composition (basic and acidic residues); it reads AVVKIEEKKESS. Positions 164 to 182 are enriched in low complexity; that stretch reads SDSSSESSSSESESESSSS. Positions 191–201 are enriched in basic and acidic residues; sequence VEKTEEKKEGS. The span at 202 to 218 shows a compositional bias: low complexity; sequence SESSSDSESSSDSSSES. Over residues 219 to 233 the composition is skewed to acidic residues; the sequence is GDSDSSSDSESESSS. Basic and acidic residues predominate over residues 234–250; the sequence is EDEKKRKAEPASEERPA. 2 RRM domains span residues 263–341 and 366–443; these read CTVF…LSNP and DTVF…FSTP. Positions 441 to 500 are disordered; it reads STPRTGGGSRGGRGGFGGRGGFGGRGGFGGGRGRGRGGARSGNPNRGSVAPFSGNKVTFD. Residues 445–480 are compositionally biased toward gly residues; it reads TGGGSRGGRGGFGGRGGFGGRGGFGGGRGRGRGGAR.

The protein belongs to the RRM GAR family.

The protein resides in the nucleus. It localises to the nucleolus. Functionally, helps the assembly of pre-ribosomal particles containing 18S rRNA. The sequence is that of Protein gar2 (gar2) from Schizosaccharomyces pombe (strain 972 / ATCC 24843) (Fission yeast).